Reading from the N-terminus, the 472-residue chain is 3-isopropylmalate dehydratase large subunit (472 aa).

Cys346, Cys406, and Cys409 together coordinate [4Fe-4S] cluster.

The protein belongs to the aconitase/IPM isomerase family. LeuC type 1 subfamily. In terms of assembly, heterodimer of LeuC and LeuD. It depends on [4Fe-4S] cluster as a cofactor.

It carries out the reaction (2R,3S)-3-isopropylmalate = (2S)-2-isopropylmalate. It participates in amino-acid biosynthesis; L-leucine biosynthesis; L-leucine from 3-methyl-2-oxobutanoate: step 2/4. Functionally, catalyzes the isomerization between 2-isopropylmalate and 3-isopropylmalate, via the formation of 2-isopropylmaleate. The chain is 3-isopropylmalate dehydratase large subunit from Thermus thermophilus (strain ATCC BAA-163 / DSM 7039 / HB27).